The following is a 297-amino-acid chain: Inactive beta selinene synthase (297 aa).

This sequence belongs to the terpene synthase family. As to quaternary structure, monomer.

It is found in the cytoplasm. In terms of biological role, inactive selinene synthase. The protein is Inactive beta selinene synthase of Zea mays (Maize).